We begin with the raw amino-acid sequence, 370 residues long: MPHQQILMLFGLLPVATNISTWWNFGSMLLACLTLQLLTGFFLAVHYTANINLAFSSIIHITRDVPYGWMMQNLHAIGASMFFICIYIHIARGLYYGSYLNKETWLSGTTLLIMLMATAFFGYVLPWGQMSFWAATVITNLLTAIPYLGSTMTTWLWGGFAINDPTLTRFFALHFILPFGIISLSSLHILLLHEEGSSNPLGTNSDIDKIPFHPYQTYKDMLMLTIMTIMLLTIVSFFPDIFNDPDNFSKANPLVTPQHIKPEWYFLFAYGILRSIPNKLGGALALTMSIMMLLTLPFTHTSKLRSMMFRPFMQLTFWTFTATFLVISWTATKPVEPPFTTISQVAALMYFLFFISNPIMGWLENKIMKL.

4 helical membrane passes run Phe-25–Val-45, Trp-69–Ile-90, Trp-105–Leu-125, and Phe-170–Leu-190. 2 residues coordinate heme b: His-75 and His-89. Residues His-174 and His-188 each contribute to the heme b site. Position 193 (His-193) interacts with a ubiquinone. The next 4 membrane-spanning stretches (helical) occupy residues Tyr-218–Phe-238, Leu-280–His-300, Phe-312–Thr-332, and Phe-339–Pro-358.

It belongs to the cytochrome b family. In terms of assembly, the cytochrome bc1 complex contains 3 respiratory subunits (MT-CYB, CYC1 and UQCRFS1), 2 core proteins (UQCRC1 and UQCRC2) and probably 6 low-molecular weight proteins. Heme b serves as cofactor.

It is found in the mitochondrion inner membrane. In terms of biological role, component of the ubiquinol-cytochrome c reductase complex (complex III or cytochrome b-c1 complex) that is part of the mitochondrial respiratory chain. The b-c1 complex mediates electron transfer from ubiquinol to cytochrome c. Contributes to the generation of a proton gradient across the mitochondrial membrane that is then used for ATP synthesis. In Chilabothrus strigilatus fosteri (Bimini Island boa constrictor), this protein is Cytochrome b (MT-CYB).